The primary structure comprises 65 residues: Large ribosomal subunit protein bL28 (65 aa).

The tract at residues 1–26 (MARRDDLTNKGPMSGNKRSHALNATK) is disordered. Residues 17 to 26 (KRSHALNATK) show a composition bias toward basic residues.

This sequence belongs to the bacterial ribosomal protein bL28 family.

This chain is Large ribosomal subunit protein bL28, found in Mycoplasma mobile (strain ATCC 43663 / 163K / NCTC 11711) (Mesomycoplasma mobile).